A 179-amino-acid chain; its full sequence is MRVLGIDPGLANLGLGLVEGDVRRAKHLYHVCLTTESAWLMPRRLQYLHEELTRLLTEYRPDAVAIEDQILRRQADVAFKVGQAFGVVQLACAQAGVPIHAYGPMQVKKSLVGTGRADKEQVIYMVKASLGIRELFNNHAADALALALTHLAHAPMQERSERLAAAGRAARTGDAPLRR.

Catalysis depends on residues Asp7 and Glu67. Mn(2+) is bound by residues Asp7 and Glu67. The short motif at 68–74 (DQILRRQ) is the DNA-binding loop element. Catalysis depends on residues His139 and Asp142. Position 139 (His139) interacts with Mn(2+).

It belongs to the RuvC family. As to quaternary structure, homodimer which binds Holliday junction (HJ) DNA. The HJ becomes 2-fold symmetrical on binding to RuvC with unstacked arms; it has a different conformation from HJ DNA in complex with RuvA. In the full resolvosome a probable DNA-RuvA(4)-RuvB(12)-RuvC(2) complex forms which resolves the HJ. The cofactor is Mn(2+).

The protein resides in the cytoplasm. The catalysed reaction is Endonucleolytic cleavage at a junction such as a reciprocal single-stranded crossover between two homologous DNA duplexes (Holliday junction).. The RuvA-RuvB-RuvC complex processes Holliday junction (HJ) DNA during genetic recombination and DNA repair. Endonuclease that resolves HJ intermediates. Cleaves cruciform DNA by making single-stranded nicks across the HJ at symmetrical positions within the homologous arms, probably yielding a 5'-phosphate and a 3'-hydroxyl group; requires a central core of homology in the junction. The consensus cleavage sequence is 5'-(G/C)TC(C/G)-3' (a different site than E.coli); cleavage occurs on the 3'-side of the TC dinucleotide at the point of strand exchange. Also resolves nicked HJ intermediates, replication forks and Y-junction DNA in vitro. HJ branch migration catalyzed by RuvA-RuvB allows RuvC to scan DNA until it finds its consensus sequence, where it cleaves and resolves the cruciform DNA. Its function is as follows. Binds HJ DNA independently of homologous core or consensus sequence; Mn(2+) is not essential for binding but improves it, while &gt;1.0 mM Mg(2+) inhibit binding. Also binds Y-junction DNA less well. Requires a homologous core to cleave DNA. Another study shows divalent cations (Mn(2+), Mg(2+) and Ca(2+), tested up to 5.0 mM) improve DNA binding considerably over binding in their absence. The sequence is that of Crossover junction endodeoxyribonuclease RuvC from Deinococcus radiodurans (strain ATCC 13939 / DSM 20539 / JCM 16871 / CCUG 27074 / LMG 4051 / NBRC 15346 / NCIMB 9279 / VKM B-1422 / R1).